A 142-amino-acid polypeptide reads, in one-letter code: Large ribosomal subunit protein uL13 (142 aa).

It belongs to the universal ribosomal protein uL13 family. As to quaternary structure, part of the 50S ribosomal subunit.

This protein is one of the early assembly proteins of the 50S ribosomal subunit, although it is not seen to bind rRNA by itself. It is important during the early stages of 50S assembly. This is Large ribosomal subunit protein uL13 from Vibrio vulnificus (strain CMCP6).